Consider the following 305-residue polypeptide: MDKTILGSIDIETLIRHLMIIIFGLVGLTGNAIVFWLLGFHLHRNAFLVYILNLALADFFYLLCHIINSIMFLLKVPSPNIILDHCFYTIMIVLYITGLSMLSAISTERCLSVLCPIWYRCHRPEHTSTAMCAVIWVMSLLISILNGYFCNFSSPKYVNNSVCQASDIFIRTYPIFLFVLLCLSTLALLARLFSGAGKRKFTRLFVTIMLAILVFLLCGLPLGFFWFLSPWIEDRFIVLDYRLFFASVVLTVVNSCANPIIYFFVGSFRHRLKQQTLKMFLQRALQDTPETPENMVEMSRSKAEP.

Residues 1 to 17 (MDKTILGSIDIETLIRH) lie on the Extracellular side of the membrane. A helical membrane pass occupies residues 18-38 (LMIIIFGLVGLTGNAIVFWLL). Residues 39–46 (GFHLHRNA) lie on the Cytoplasmic side of the membrane. The chain crosses the membrane as a helical span at residues 47–67 (FLVYILNLALADFFYLLCHII). The Extracellular segment spans residues 68 to 85 (NSIMFLLKVPSPNIILDH). The helical transmembrane segment at 86–106 (CFYTIMIVLYITGLSMLSAIS) threads the bilayer. Residues 107 to 129 (TERCLSVLCPIWYRCHRPEHTST) are Cytoplasmic-facing. The helical transmembrane segment at 130–150 (AMCAVIWVMSLLISILNGYFC) threads the bilayer. N-linked (GlcNAc...) asparagine glycans are attached at residues asparagine 151 and asparagine 159. Topologically, residues 151 to 172 (NFSSPKYVNNSVCQASDIFIRT) are extracellular. The chain crosses the membrane as a helical span at residues 173–193 (YPIFLFVLLCLSTLALLARLF). Residues 194-207 (SGAGKRKFTRLFVT) lie on the Cytoplasmic side of the membrane. The helical transmembrane segment at 208 to 228 (IMLAILVFLLCGLPLGFFWFL) threads the bilayer. Topologically, residues 229–243 (SPWIEDRFIVLDYRL) are extracellular. The chain crosses the membrane as a helical span at residues 244-264 (FFASVVLTVVNSCANPIIYFF). The Cytoplasmic portion of the chain corresponds to 265 to 305 (VGSFRHRLKQQTLKMFLQRALQDTPETPENMVEMSRSKAEP).

It belongs to the G-protein coupled receptor 1 family. Mas subfamily. Expressed in a subset of sensory neurons that includes nociceptors. Expressed in the subclass of non-peptidergic sensory neurons that are IB4(+) and VR1(-).

Its subcellular location is the cell membrane. In terms of biological role, orphan receptor. May be a receptor for RFamide-family neuropeptides such as NPFF and NPAF, which are analgesic in vivo. May regulate nociceptor function and/or development, including the sensation or modulation of pain. The chain is Mas-related G-protein coupled receptor member A8 (Mrgpra8) from Mus musculus (Mouse).